The chain runs to 169 residues: Regulator of G-protein signaling rgs-2 (169 aa).

The region spanning 39 to 158 (GWSQSFENLM…FLASNIYKTV (120 aa)) is the RGS domain.

Post-translationally, may be phosphorylated and activated by egl-4. In terms of tissue distribution, expressed in a subset of neurons including ventral cord and head- and tail-ganglia neurons. Also expressed in non-neuronal cells including pharyngeal and uterine muscles.

In terms of biological role, weakly inhibits G protein signaling in nervous system, interacting preferentially with the G(O) subfamily member goa-1. In vitro, it acts as a GTPase activator of goa-1. Rgs-1 and rgs-2 redundantly adjust signaling when worms are fed to allow rapid induction of egg-laying behavior. Modulates chemotaxis responses by regulating negatively the sensitivity to quinine in ASH sensory neurons. The sequence is that of Regulator of G-protein signaling rgs-2 (rgs-2) from Caenorhabditis elegans.